The following is a 291-amino-acid chain: MDPIRKPAWLQKKITPAAHAEMEGLLKELRLNTVCQQARCPNITECFGKRQATFLILGRICTRLCSFCSVSKETPLPLEPGEAASVAEAVKRLGLSHVVITSPTRDDLSDGGASVYAETVARIRSVSPRTKVELLIPDFRGERAALAAVVESAPDILGHNLETVPRLYSIRSGADYQRSLDLLAQARRMAPDLNTKSGLMLGLGEEEAELYAVMEDLLKAGCGYLSLGQYLAPSRMHHPVQRYVEPELFEKYKEKALAMGFEHVESAPYVRSSYHAENYLEVKSPPPEGEG.

The [4Fe-4S] cluster site is built by cysteine 35, cysteine 40, cysteine 46, cysteine 61, cysteine 65, cysteine 68, and serine 273. The region spanning 47–262 (FGKRQATFLI…KEKALAMGFE (216 aa)) is the Radical SAM core domain.

The protein belongs to the radical SAM superfamily. Lipoyl synthase family. The cofactor is [4Fe-4S] cluster.

The protein resides in the cytoplasm. The enzyme catalyses [[Fe-S] cluster scaffold protein carrying a second [4Fe-4S](2+) cluster] + N(6)-octanoyl-L-lysyl-[protein] + 2 oxidized [2Fe-2S]-[ferredoxin] + 2 S-adenosyl-L-methionine + 4 H(+) = [[Fe-S] cluster scaffold protein] + N(6)-[(R)-dihydrolipoyl]-L-lysyl-[protein] + 4 Fe(3+) + 2 hydrogen sulfide + 2 5'-deoxyadenosine + 2 L-methionine + 2 reduced [2Fe-2S]-[ferredoxin]. It participates in protein modification; protein lipoylation via endogenous pathway; protein N(6)-(lipoyl)lysine from octanoyl-[acyl-carrier-protein]: step 2/2. Its function is as follows. Catalyzes the radical-mediated insertion of two sulfur atoms into the C-6 and C-8 positions of the octanoyl moiety bound to the lipoyl domains of lipoate-dependent enzymes, thereby converting the octanoylated domains into lipoylated derivatives. This Geobacter sp. (strain M21) protein is Lipoyl synthase.